Consider the following 299-residue polypeptide: 33 kDa chaperonin (299 aa).

2 disulfides stabilise this stretch: Cys238–Cys240 and Cys271–Cys274.

This sequence belongs to the HSP33 family. Post-translationally, under oxidizing conditions two disulfide bonds are formed involving the reactive cysteines. Under reducing conditions zinc is bound to the reactive cysteines and the protein is inactive.

The protein resides in the cytoplasm. Its function is as follows. Redox regulated molecular chaperone. Protects both thermally unfolding and oxidatively damaged proteins from irreversible aggregation. Plays an important role in the bacterial defense system toward oxidative stress. The protein is 33 kDa chaperonin of Alkaliphilus oremlandii (strain OhILAs) (Clostridium oremlandii (strain OhILAs)).